The chain runs to 1026 residues: mRNA transport homolog 4 (1026 aa).

The 157-residue stretch at 134-290 (ILCIDNNQSV…WVASIKQQPV (157 aa)) folds into the Helicase ATP-binding domain. ATP is bound at residue 147-154 (AHTSAGKT). Positions 238 to 241 (DEIH) match the DEIH box motif. The Helicase C-terminal domain occupies 360–564 (NVLKIIRSVA…NMVLNLMRVE (205 aa)).

This sequence belongs to the helicase family. SKI2 subfamily.

It is found in the nucleus. The chain is mRNA transport homolog 4 (mtr-4) from Caenorhabditis elegans.